The chain runs to 125 residues: Histone H2A.v3 (125 aa).

This sequence belongs to the histone H2A family. As to quaternary structure, the nucleosome is a histone octamer containing two molecules each of H2A, H2B, H3 and H4 assembled in one H3-H4 heterotetramer and two H2A-H2B heterodimers. The octamer wraps approximately 147 bp of DNA.

The protein localises to the nucleus. The protein resides in the chromosome. Functionally, core component of nucleosome which plays a central role in DNA double strand break (DSB) repair. Nucleosomes wrap and compact DNA into chromatin, limiting DNA accessibility to the cellular machineries which require DNA as a template. Histones thereby play a central role in transcription regulation, DNA repair, DNA replication and chromosomal stability. DNA accessibility is regulated via a complex set of post-translational modifications of histones, also called histone code, and nucleosome remodeling. This chain is Histone H2A.v3 (H2Av3), found in Dictyostelium discoideum (Social amoeba).